Consider the following 185-residue polypeptide: Pro-adrenomedullin (185 aa).

Residues 1–21 (MKLVSIALMLLGSLAVLGADT) form the signal peptide. An Arginine amide modification is found at R41. Residues 45–91 (ELQASSSYPTGLVDEKTVPTQTLGLQDKQSTSSTPQASTQSTAHIRV) constitute a propeptide that is removed on maturation. The tract at residues 68–89 (GLQDKQSTSSTPQASTQSTAHI) is disordered. Residues 73–87 (QSTSSTPQASTQSTA) show a composition bias toward low complexity. Cysteines 107 and 112 form a disulfide. Positions 125–185 (TDKDKDGMAP…HQDISRVSRL (61 aa)) are disordered. Position 143 is a tyrosine amide (Y143). Positions 150-185 (SLPEVLRARTVESSQEQTHSAPASPAHQDISRVSRL) are cleaved as a propeptide — preproAM C-terminal fragment. Residues 160-170 (VESSQEQTHSA) are compositionally biased toward polar residues.

Belongs to the adrenomedullin family. In terms of tissue distribution, expressed in adrenal glands, lung, kidney, heart, spleen, duodenum and submandibular glands.

The protein resides in the secreted. Its function is as follows. Adrenomedullin/ADM and proadrenomedullin N-20 terminal peptide/PAMP are peptide hormones that act as potent hypotensive and vasodilatator agents. Numerous actions have been reported most related to the physiologic control of fluid and electrolyte homeostasis. Functionally, ADM function is mediated by the CALCRL-RAMP2 and CALCRL-RAMP3 receptor complexes with ADM showing the highest potency for the CALCRL-RAMP2 complex. This is Pro-adrenomedullin from Rattus norvegicus (Rat).